A 315-amino-acid polypeptide reads, in one-letter code: Tyrosine recombinase XerC (315 aa).

Residues 14-105 (PDLLNERQSW…GLRSLLHHLQ (92 aa)) form the Core-binding (CB) domain. One can recognise a Tyr recombinase domain in the interval 126–309 (SLPKPLTDRQ…DTARLLEIYD (184 aa)). Residues R169, K193, H261, R264, and H287 contribute to the active site. Y296 functions as the O-(3'-phospho-DNA)-tyrosine intermediate in the catalytic mechanism.

Belongs to the 'phage' integrase family. XerC subfamily. In terms of assembly, forms a cyclic heterotetrameric complex composed of two molecules of XerC and two molecules of XerD.

The protein resides in the cytoplasm. Its function is as follows. Site-specific tyrosine recombinase, which acts by catalyzing the cutting and rejoining of the recombining DNA molecules. The XerC-XerD complex is essential to convert dimers of the bacterial chromosome into monomers to permit their segregation at cell division. It also contributes to the segregational stability of plasmids. The polypeptide is Tyrosine recombinase XerC (Agrobacterium fabrum (strain C58 / ATCC 33970) (Agrobacterium tumefaciens (strain C58))).